Consider the following 536-residue polypeptide: Phosphoenolpyruvate carboxykinase (ATP) (536 aa).

Substrate contacts are provided by R61, Y195, and K201. ATP is bound by residues K201, H220, and G236–T244. Residues K201 and H220 each contribute to the Mn(2+) site. Residue D257 participates in Mn(2+) binding. Positions 285, 322, and 447 each coordinate ATP. Position 322 (R322) interacts with substrate.

This sequence belongs to the phosphoenolpyruvate carboxykinase (ATP) family. The cofactor is Mn(2+).

Its subcellular location is the cytoplasm. The catalysed reaction is oxaloacetate + ATP = phosphoenolpyruvate + ADP + CO2. The protein operates within carbohydrate biosynthesis; gluconeogenesis. Functionally, involved in the gluconeogenesis. Catalyzes the conversion of oxaloacetate (OAA) to phosphoenolpyruvate (PEP) through direct phosphoryl transfer between the nucleoside triphosphate and OAA. The sequence is that of Phosphoenolpyruvate carboxykinase (ATP) from Rhizobium johnstonii (strain DSM 114642 / LMG 32736 / 3841) (Rhizobium leguminosarum bv. viciae).